Here is a 197-residue protein sequence, read N- to C-terminus: Imidazoleglycerol-phosphate dehydratase (197 aa).

This sequence belongs to the imidazoleglycerol-phosphate dehydratase family.

It is found in the cytoplasm. It catalyses the reaction D-erythro-1-(imidazol-4-yl)glycerol 3-phosphate = 3-(imidazol-4-yl)-2-oxopropyl phosphate + H2O. Its pathway is amino-acid biosynthesis; L-histidine biosynthesis; L-histidine from 5-phospho-alpha-D-ribose 1-diphosphate: step 6/9. This is Imidazoleglycerol-phosphate dehydratase from Azorhizobium caulinodans (strain ATCC 43989 / DSM 5975 / JCM 20966 / LMG 6465 / NBRC 14845 / NCIMB 13405 / ORS 571).